Reading from the N-terminus, the 116-residue chain is Protein Rev (116 aa).

Phosphoserine; by host CK2 is present on residues Ser5 and Ser8. The homomultimerization stretch occupies residues 18-26 (LIKFLYQSN). The segment at 23–49 (YQSNPPPNPEGTRQARRNRRRRWRERQ) is disordered. A Nuclear localization signal and RNA-binding (RRE) motif is present at residues 34-50 (TRQARRNRRRRWRERQR). Over residues 36–47 (QARRNRRRRWRE) the composition is skewed to basic residues. The Nuclear export signal and binding to XPO1 motif lies at 73 to 84 (LQLPPLERLTLD). Phosphoserine; by host occurs at positions 92 and 99. The interval 92 to 116 (SGTQGVGSPQILVESPTVLESGTKE) is disordered.

The protein belongs to the HIV-1 REV protein family. As to quaternary structure, homomultimer; when bound to the RRE. Multimeric assembly is essential for activity and may involve XPO1. Binds to human KPNB1, XPO1, TNPO1, RANBP5 and IPO7. Interacts with the viral Integrase. Interacts with human KHDRBS1. Interacts with human NAP1; this interaction decreases Rev multimerization and stimulates its activity. Interacts with human DEAD-box helicases DDX3 and DDX24; these interactions may serve for viral RNA export to the cytoplasm and packaging, respectively. Interacts with human PSIP1; this interaction may inhibit HIV-1 DNA integration by promoting dissociation of the Integrase-LEDGF/p75 complex. Post-translationally, asymmetrically arginine dimethylated at one site by host PRMT6. Methylation impairs the RNA-binding activity and export of viral RNA from the nucleus to the cytoplasm. Phosphorylated by protein kinase CK2. Presence of, and maybe binding to the N-terminus of the regulatory beta subunit of CK2 is necessary for CK2-mediated Rev's phosphorylation.

Its subcellular location is the host nucleus. The protein resides in the host nucleolus. It localises to the host cytoplasm. Functionally, escorts unspliced or incompletely spliced viral pre-mRNAs (late transcripts) out of the nucleus of infected cells. These pre-mRNAs carry a recognition sequence called Rev responsive element (RRE) located in the env gene, that is not present in fully spliced viral mRNAs (early transcripts). This function is essential since most viral proteins are translated from unspliced or partially spliced pre-mRNAs which cannot exit the nucleus by the pathway used by fully processed cellular mRNAs. Rev itself is translated from a fully spliced mRNA that readily exits the nucleus. Rev's nuclear localization signal (NLS) binds directly to KPNB1/Importin beta-1 without previous binding to KPNA1/Importin alpha-1. KPNB1 binds to the GDP bound form of RAN (Ran-GDP) and targets Rev to the nucleus. In the nucleus, the conversion from Ran-GDP to Ran-GTP dissociates Rev from KPNB1 and allows Rev's binding to the RRE in viral pre-mRNAs. Rev multimerization on the RRE via cooperative assembly exposes its nuclear export signal (NES) to the surface. Rev can then form a complex with XPO1/CRM1 and Ran-GTP, leading to nuclear export of the complex. Conversion from Ran-GTP to Ran-GDP mediates dissociation of the Rev/RRE/XPO1/RAN complex, so that Rev can return to the nucleus for a subsequent round of export. Beside KPNB1, also seems to interact with TNPO1/Transportin-1, RANBP5/IPO5 and IPO7/RANBP7 for nuclear import. The nucleoporin-like HRB/RIP is an essential cofactor that probably indirectly interacts with Rev to release HIV RNAs from the perinuclear region to the cytoplasm. The sequence is that of Protein Rev from Human immunodeficiency virus type 1 group M subtype B (isolate BRU/LAI) (HIV-1).